We begin with the raw amino-acid sequence, 2078 residues long: Autophagy-related protein 2 homolog B (2078 aa).

Residues 13–108 (ACRYLLQRYL…EMVFRPRPRP (96 aa)) form the Chorein N-terminal domain. A phosphoserine mark is found at Ser255 and Ser379. The segment at 473–495 (GSTFPSNLVHPTPLQKTSLPSRS) is disordered. Polar residues predominate over residues 486-495 (LQKTSLPSRS). Residues Ser497, Ser840, Ser886, Ser899, and Ser1008 each carry the phosphoserine modification. A disordered region spans residues 868 to 888 (EEEENDGHYQEEEEGGAHSLK). The segment covering 873 to 888 (DGHYQEEEEGGAHSLK) has biased composition (basic and acidic residues). A Phosphotyrosine modification is found at Tyr1012. Phosphoserine occurs at positions 1016 and 1018. Thr1022 carries the post-translational modification Phosphothreonine. The disordered stretch occupies residues 1375 to 1405 (ADMKPGAFQRRSKVDSSGRSSSRGPVLPEAD). Ser1526 is subject to Phosphoserine.

Belongs to the ATG2 family. In terms of assembly, interacts with WDR45/WIPI4.

Its subcellular location is the preautophagosomal structure membrane. The protein resides in the lipid droplet. It localises to the endoplasmic reticulum membrane. It catalyses the reaction a 1,2-diacyl-sn-glycero-3-phospho-L-serine(in) = a 1,2-diacyl-sn-glycero-3-phospho-L-serine(out). The catalysed reaction is a 1,2-diacyl-sn-glycero-3-phosphoethanolamine(in) = a 1,2-diacyl-sn-glycero-3-phosphoethanolamine(out). In terms of biological role, lipid transfer protein required for both autophagosome formation and regulation of lipid droplet morphology and dispersion. Tethers the edge of the isolation membrane (IM) to the endoplasmic reticulum (ER) and mediates direct lipid transfer from ER to IM for IM expansion. Binds to the ER exit site (ERES), which is the membrane source for autophagosome formation, and extracts phospholipids from the membrane source and transfers them to ATG9 (ATG9A or ATG9B) to the IM for membrane expansion. Lipid transfer activity is enhanced by WDR45/WIPI4, which promotes ATG2B-association with phosphatidylinositol 3-monophosphate (PI3P)-containing membranes. The chain is Autophagy-related protein 2 homolog B from Homo sapiens (Human).